We begin with the raw amino-acid sequence, 106 residues long: ATP-dependent Clp protease adapter protein ClpS (106 aa).

The protein belongs to the ClpS family. Binds to the N-terminal domain of the chaperone ClpA.

Its function is as follows. Involved in the modulation of the specificity of the ClpAP-mediated ATP-dependent protein degradation. The chain is ATP-dependent Clp protease adapter protein ClpS from Methylococcus capsulatus (strain ATCC 33009 / NCIMB 11132 / Bath).